The primary structure comprises 326 residues: tRNA-modifying protein YgfZ (326 aa).

Residues Trp-27 and Trp-189 each coordinate folate.

This sequence belongs to the tRNA-modifying YgfZ family.

The protein resides in the cytoplasm. Folate-binding protein involved in regulating the level of ATP-DnaA and in the modification of some tRNAs. It is probably a key factor in regulatory networks that act via tRNA modification, such as initiation of chromosomal replication. This is tRNA-modifying protein YgfZ from Escherichia coli (strain SE11).